Here is a 269-residue protein sequence, read N- to C-terminus: Propanediol uptake facilitator PduF (269 aa).

A run of 2 helical transmembrane segments spans residues 10–30 (IAEF…LSAL) and 42–62 (ICII…GISG). Residues 66–68 (NPA) carry the NPA 1 motif. 3 consecutive transmembrane segments (helical) span residues 69-89 (ITIA…PYTV), 143-163 (VWQA…MIMA), and 179-199 (LLIG…TGFA). Residues 201–203 (NPA) carry the NPA 2 motif. Residues 228 to 248 (IPYFIVPIVAPIIGACAGAAI) traverse the membrane as a helical segment.

The protein belongs to the MIP/aquaporin (TC 1.A.8) family.

It is found in the cell inner membrane. Probably facilitates diffusion of 1,2-propanediol (1,2-PD) into the cell. This is Propanediol uptake facilitator PduF from Citrobacter freundii.